Reading from the N-terminus, the 240-residue chain is Histidinol dehydrogenase homolog oryD (240 aa).

Residues Gln-64 and His-67 each coordinate Zn(2+). Glu-134 serves as the catalytic Proton acceptor. Residues Asp-168 and His-228 each contribute to the Zn(2+) site.

Belongs to the histidinol dehydrogenase family. Zn(2+) is required as a cofactor.

It functions in the pathway secondary metabolite biosynthesis. Its function is as follows. Histidinol dehydrogenase homolog; part of the gene cluster that mediates the biosynthesis of oryzines, natural products with an unusual maleidride backbone. The two subunits of the fungal fatty acid synthase oryfasA and oryfasB probably form octenoic acid. This fatty acid is most likely activated by the acyl-CoA ligase oryP to give octenyl-CoA before the citrate synthase-like protein oryE catalyzes condensation with oxaloacetate to form tricarboxylic acid. The next steps of the pathways are conjectural, but a favorite possible route has been proposed, beginning with decarboxylation and concomitant dehydration by the decarboxylase oryM, followed by tautomerization, which may lead to the production of a diene intermediate. Reduction of this diene intermediate could give the known metabolite piliformic acid. On the pathway to oryzine B and oryzine A, however, hydroxylation of the diene by the alpha-ketoglutarate-dependent dioxygenase oryG and lactonisation by the lactonohydrolases oryH or oryL could give oryzine B directly. Finally, enoyl reduction by the dehydrogenase oryD would then convert oryzine B into oryzine A. This is Histidinol dehydrogenase homolog oryD from Aspergillus oryzae (strain ATCC 42149 / RIB 40) (Yellow koji mold).